A 335-amino-acid polypeptide reads, in one-letter code: Holliday junction branch migration complex subunit RuvB (335 aa).

Residues 4 to 184 form a large ATPase domain (RuvB-L) region; sequence ADRLIQPTAL…FGIVQRLEFY (181 aa). ATP contacts are provided by residues I23, R24, G65, K68, T69, T70, 131-133, R174, Y184, and R221; that span reads EDY. T69 lines the Mg(2+) pocket. The segment at 185–255 is small ATPAse domain (RuvB-S); sequence NIKDLTQIVK…VASAALDMLD (71 aa). The head domain (RuvB-H) stretch occupies residues 258 to 335; the sequence is KEGFDYMDRK…LHFGYDYEPN (78 aa). Positions 294, 313, and 318 each coordinate DNA.

Belongs to the RuvB family. In terms of assembly, homohexamer. Forms an RuvA(8)-RuvB(12)-Holliday junction (HJ) complex. HJ DNA is sandwiched between 2 RuvA tetramers; dsDNA enters through RuvA and exits via RuvB. An RuvB hexamer assembles on each DNA strand where it exits the tetramer. Each RuvB hexamer is contacted by two RuvA subunits (via domain III) on 2 adjacent RuvB subunits; this complex drives branch migration. In the full resolvosome a probable DNA-RuvA(4)-RuvB(12)-RuvC(2) complex forms which resolves the HJ.

Its subcellular location is the cytoplasm. It catalyses the reaction ATP + H2O = ADP + phosphate + H(+). In terms of biological role, the RuvA-RuvB-RuvC complex processes Holliday junction (HJ) DNA during genetic recombination and DNA repair, while the RuvA-RuvB complex plays an important role in the rescue of blocked DNA replication forks via replication fork reversal (RFR). RuvA specifically binds to HJ cruciform DNA, conferring on it an open structure. The RuvB hexamer acts as an ATP-dependent pump, pulling dsDNA into and through the RuvAB complex. RuvB forms 2 homohexamers on either side of HJ DNA bound by 1 or 2 RuvA tetramers; 4 subunits per hexamer contact DNA at a time. Coordinated motions by a converter formed by DNA-disengaged RuvB subunits stimulates ATP hydrolysis and nucleotide exchange. Immobilization of the converter enables RuvB to convert the ATP-contained energy into a lever motion, pulling 2 nucleotides of DNA out of the RuvA tetramer per ATP hydrolyzed, thus driving DNA branch migration. The RuvB motors rotate together with the DNA substrate, which together with the progressing nucleotide cycle form the mechanistic basis for DNA recombination by continuous HJ branch migration. Branch migration allows RuvC to scan DNA until it finds its consensus sequence, where it cleaves and resolves cruciform DNA. The chain is Holliday junction branch migration complex subunit RuvB from Pseudoalteromonas atlantica (strain T6c / ATCC BAA-1087).